Consider the following 378-residue polypeptide: Monomethylxanthine methyltransferase 1 (378 aa).

Residues Tyr18, Cys61, Asn66, Asp100, Leu101, Ser139, Phe140, and Cys156 each contribute to the S-adenosyl-L-homocysteine site. Theobromine contacts are provided by Tyr157, His160, and Trp161. Asn178, Asp260, Phe262, and Asn263 together coordinate Mg(2+). Tyr362 serves as a coordination point for theobromine.

Belongs to the methyltransferase superfamily. Type-7 methyltransferase family. Mg(2+) serves as cofactor. As to expression, expressed, at low levels, in stems, young leaves, floral buds and immature fruits (grains), but not in roots, old leaves and mature fruits.

The protein localises to the cytoplasm. The catalysed reaction is 7-methylxanthine + S-adenosyl-L-methionine = theobromine + S-adenosyl-L-homocysteine + H(+). It functions in the pathway alkaloid biosynthesis. Involved in the biosynthesis of caffeine. Catalyzes the conversion of 7-methylxanthine (7mX) to theobromine and of paraxanthine to caffeine. Has a 5-fold preference for 7mX. This Coffea arabica (Arabian coffee) protein is Monomethylxanthine methyltransferase 1.